The chain runs to 74 residues: MSKLGVLLTICLLLFPITALPVDGDQPADRPVERMQDNISSEQHPFFEKRAARCCTYHGSCLKEKCRRKYCCGR.

The signal sequence occupies residues 1–19 (MSKLGVLLTICLLLFPITA). Positions 20–50 (LPVDGDQPADRPVERMQDNISSEQHPFFEKR) are excised as a propeptide. Disulfide bonds link C54–C66, C55–C71, and C61–C72. Cysteine amide is present on C72.

This sequence belongs to the conotoxin M superfamily. In terms of tissue distribution, expressed by the venom duct.

Its subcellular location is the secreted. Psi-conotoxins act on postsynaptic membranes, and act as non-competitive antagonist of nicotinic acetylcholine receptors (nAChR). Reversibly inhibits both adult- and fetal-types nAChR. The inhibition potency against the adult- (alpha-1/beta-1/epsilon/delta) is higher than against the fetal-type (alpha-1/beta-1/gamma/delta). Induces flaccid paralysis in goldfish, but does not induce any remarkable behavior in mice and does not block action potential in directly stimulated frog muscle preparations. In Conus parius (Cone snail), this protein is Psi-conotoxin PrIIIE.